The sequence spans 497 residues: Angiopoietin-1 (497 aa).

Positions 1–19 (MTVFLSFAFLAAILTHIGC) are cleaved as a signal peptide. 5 N-linked (GlcNAc...) asparagine glycosylation sites follow: Asn-92, Asn-122, Asn-154, Asn-243, and Asn-294. The stretch at 158–256 (RLEIQLLENS…LQKQQLELMD (99 aa)) forms a coiled coil. Positions 276–496 (KEEEKPFRDC…STTMMIRPLD (221 aa)) constitute a Fibrinogen C-terminal domain. 2 disulfide bridges follow: Cys-285–Cys-314 and Cys-438–Cys-451.

In terms of assembly, homooligomer. Interacts with TEK/TIE2. Interacts with SVEP1/polydom. Interacts with THBD; this interaction significantly inhibits the generation of activated PC and TAFIa/CPB2 by the thrombin/thrombomodulin complex.

Its subcellular location is the secreted. Binds and activates TIE2 receptor by inducing its tyrosine phosphorylation. Implicated in endothelial developmental processes later and distinct from that of VEGF. Appears to play a crucial role in mediating reciprocal interactions between the endothelium and surrounding matrix and mesenchyme. Mediates blood vessel maturation/stability. It may play an important role in the heart early development. The sequence is that of Angiopoietin-1 (ANGPT1) from Canis lupus familiaris (Dog).